Reading from the N-terminus, the 206-residue chain is Dephospho-CoA kinase (206 aa).

The DPCK domain maps to 4-204 (IVGLTGGIGS…QFYLQQAENK (201 aa)). 12–17 (GSGKTT) is an ATP binding site.

The protein belongs to the CoaE family.

It localises to the cytoplasm. It carries out the reaction 3'-dephospho-CoA + ATP = ADP + CoA + H(+). Its pathway is cofactor biosynthesis; coenzyme A biosynthesis; CoA from (R)-pantothenate: step 5/5. Its function is as follows. Catalyzes the phosphorylation of the 3'-hydroxyl group of dephosphocoenzyme A to form coenzyme A. This is Dephospho-CoA kinase from Haemophilus influenzae (strain 86-028NP).